The sequence spans 1339 residues: MNNKSLLDLSSEPAIKDTDILSYFDANLPFKKRHQIVRSIYHGLKYYIYSSTSIIQVWQNIQDFISTKNDNAAFRELVYNLMMRYVSTQKHLSIIERHTFFQTIEKDPFQDIAELQLRLKSLSVLTDEGHKISGIENRVGPLLSAWFNQYLQWQSQATELQGKDADSKLVHLLFFKSLFKFSTNLVKFQWFLVPEPQMLQLVNSVVQICNHARLEDVVTEVLMFFDSMIRYSVIPKASLYDTVLILCSTYISTYSYSKLAQSVIFNLISSPVSNLAFENVFNILQYNRSNVNAVRGAVRLMRFLMLQEVKNDAIASITLSSSIEFTEFPLGFNENVDFEILGTVYLFLRTPSILNRLNFLDWHRILNILMYCSQYLPLKASTSKEAFSKTAAFANIYDRVLDFLDFEALIPLLQQFQVKLVFFLKDVLPVLKPKIRKKLLRLFETYNLIFPCNQYWVFNLEFLLGIYQCKTFDLEDRALLFKLVEDACSVADENSAPILCSKFLFPVIESFSKESDDCVVSPVYNMLFFLSVNFQNPGLKDCIDHIFQQLISDTSSVTVRRLATSTLIRLFYYYYDLRDAVPIQETLAKMLEILETPSFPFVSRMLCLQFFLRFRANGTSIYICENIDLNEPFKVLNVDSELIPAVYPISDSFVNSATVEKHIWERKENDLIKISNHSTEYGKDFVTFPTSSLLRFYRKSMATESNWTILMFMITHLADQISNRSMFIGALEEIYNLLDFMCDIVFERVSISAEIPSNIRKANIMIPILQNVQMLFVYHDQFSRAQEDELVSVFFAGLQKWNEACHVSIHSLMLCCYELPVSIRKQLPAILVTLSRLITKPDLSVHILEFLCSLARLPDLIANFTDADYRQIFAIALKYIQHRDFTKESKDSNDTESILKNSYSSYVLALAYSVLQIWFLSLRLTERKKFVPWILRGLKLASEGKPLEDLCLVQYDMMQQFCYSNSDINNQTSTFVDSDVESETWIRGNSLFTINVSVNSGFLEAVIRRPTGTTQYTFRNEASLQKFLWEENLTSSKALTRGLLCTPSSFVSHFLDPHGISLYNQPLLLPSNDDSVRRAISVFDRIPVIESLKAGLVYVGYQQRREADILANTNPSEDFLTFLNGLGTLFELKTDQKVFAGGLDRENDIDGAFAYCWKDKVTQMVFHCTTMMPTNIEHDPGCTLKKRHIGNDFVTIIFNESGLEYDFDTIPSQFNFVNIVITPESESIRRTGRQIKFYKVKALTKYDIDFSLFRRYKIVSSDALPAIVRDVTLNAAVFSHIYHRSAGDYVHIWAERLRQLKRLREKFQASVLPEDYNLDEQTKTKLQNGTNFSDFTSYL.

Ser-1036 is subject to Phosphoserine. Positions Ile-1109–Leu-1303 constitute a Rap-GAP domain.

Interacts with tsc1.

The protein resides in the cytoplasm. It is found in the nucleus. Together with tsc1, required for uptake of various amino acids from the environment and for proper conjugation. Involved in induction of gene expression of permeases and genes required for meiosis upon nitrogen starvation. May act as a GTPase-activating protein (GAP) for the small GTPase rhb1. In Schizosaccharomyces pombe (strain 972 / ATCC 24843) (Fission yeast), this protein is Tuberous sclerosis 2 protein homolog (tsc2).